Consider the following 393-residue polypeptide: Branched-chain-amino-acid aminotransferase, mitochondrial (393 aa).

The N-terminal 27 residues, 1–27 (MATAALRQIWIPRFLPVPWFLCGSRRY), are a transit peptide targeting the mitochondrion. Position 169 (Y169) interacts with substrate. At K230 the chain carries N6-(pyridoxal phosphate)lysine. K322 carries the post-translational modification N6-acetyllysine.

Belongs to the class-IV pyridoxal-phosphate-dependent aminotransferase family. As to quaternary structure, homodimer. Pyridoxal 5'-phosphate serves as cofactor.

Its subcellular location is the mitochondrion. It catalyses the reaction L-leucine + 2-oxoglutarate = 4-methyl-2-oxopentanoate + L-glutamate. The catalysed reaction is L-isoleucine + 2-oxoglutarate = (S)-3-methyl-2-oxopentanoate + L-glutamate. The enzyme catalyses L-valine + 2-oxoglutarate = 3-methyl-2-oxobutanoate + L-glutamate. Its function is as follows. Catalyzes the first reaction in the catabolism of the essential branched chain amino acids leucine, isoleucine, and valine. May also function as a transporter of branched chain alpha-keto acids. The chain is Branched-chain-amino-acid aminotransferase, mitochondrial (BCAT2) from Bos taurus (Bovine).